The primary structure comprises 664 residues: Protein LYK5 (664 aa).

Positions 1 to 26 (MAACTLHALSVTLFLLLFFAVSPAKA) are cleaved as a signal peptide. Topologically, residues 27-277 (QQPYVNNHQL…DPPGSSSSHK (251 aa)) are extracellular. N-linked (GlcNAc...) asparagine glycosylation is found at asparagine 45, asparagine 81, asparagine 111, asparagine 125, and asparagine 129. Disulfide bonds link cysteine 52–cysteine 114, cysteine 58–cysteine 181, and cysteine 112–cysteine 179. 135–141 (GDETYFS) is a binding site for chitin. N-linked (GlcNAc...) asparagine glycosylation is present at asparagine 144. 164 to 170 (ERQLTPG) provides a ligand contact to chitin. A LysM domain is found at 195–238 (LTYLVAMGDSISGIAEMFNSTSAAITEGNELTSDNIFFFTPVLV). Asparagine 213 carries an N-linked (GlcNAc...) asparagine glycan. Residues 251–269 (PSPPPPPVVATPPQTPVDP) are compositionally biased toward pro residues. The disordered stretch occupies residues 251–270 (PSPPPPPVVATPPQTPVDPP). Residues 278 to 298 (WIYIGIGIGAGLLLLLSILAL) traverse the membrane as a helical segment. Topologically, residues 299–664 (CFYKRRSKKK…DLLRSGSLGN (366 aa)) are cytoplasmic. A Protein kinase domain is found at 351–643 (KSAIESLTLY…TQVLTTLSMI (293 aa)). ATP is bound by residues 357 to 365 (LTLYRFNDL) and lysine 395.

It belongs to the protein kinase superfamily. Ser/Thr protein kinase family.

It is found in the cell membrane. May recognize microbe-derived N-acetylglucosamine (NAG)-containing ligands. In Arabidopsis thaliana (Mouse-ear cress), this protein is Protein LYK5 (LYK5).